A 213-amino-acid chain; its full sequence is Large ribosomal subunit protein uL1 (213 aa).

The protein belongs to the universal ribosomal protein uL1 family. Part of the 50S ribosomal subunit.

Probably involved in E site tRNA release. Binds directly to 23S rRNA. Its function is as follows. Protein L1 is also a translational repressor protein, it controls the translation of the L1 operon by binding to its mRNA. Thus it also controls transcription of L10 and L12 by translational coupling. Unlike the case in E.coli, where the site is in the untranslated mRNA leader, this site is within the L1 protein's structural gene. This chain is Large ribosomal subunit protein uL1, found in Methanococcus vannielii (strain ATCC 35089 / DSM 1224 / JCM 13029 / OCM 148 / SB).